The following is a 140-amino-acid chain: Blasticidin-S deaminase (140 aa).

The region spanning 8–140 is the CMP/dCMP-type deaminase domain; it reads QQDLELVEVA…ELIPLKYTRN (133 aa). Cys59 contributes to the Zn(2+) binding site. The Proton donor role is filled by Glu61. Positions 100 and 103 each coordinate Zn(2+).

This sequence belongs to the cytidine and deoxycytidylate deaminase family. The cofactor is Zn(2+).

The catalysed reaction is blasticidin S + H2O + H(+) = deaminohydroxyblasticidin S + NH4(+). Catalyzes the deamination of the cytosine moiety of the antibiotics blasticidin S, cytomycin and acetylblasticidin S. The protein is Blasticidin-S deaminase (bsr) of Bacillus cereus.